Reading from the N-terminus, the 588-residue chain is Aspartate--tRNA ligase (588 aa).

Glu-174 is a binding site for L-aspartate. The segment at 198–201 is aspartate; sequence QLFK. Arg-220 contacts L-aspartate. ATP is bound by residues 220–222 and Gln-229; that span reads RDE. His-448 contributes to the L-aspartate binding site. Residue Glu-482 coordinates ATP. Arg-489 lines the L-aspartate pocket. 534 to 537 lines the ATP pocket; that stretch reads GIDR.

Belongs to the class-II aminoacyl-tRNA synthetase family. Type 1 subfamily. In terms of assembly, homodimer.

Its subcellular location is the cytoplasm. It catalyses the reaction tRNA(Asp) + L-aspartate + ATP = L-aspartyl-tRNA(Asp) + AMP + diphosphate. Its function is as follows. Catalyzes the attachment of L-aspartate to tRNA(Asp) in a two-step reaction: L-aspartate is first activated by ATP to form Asp-AMP and then transferred to the acceptor end of tRNA(Asp). The chain is Aspartate--tRNA ligase from Xanthomonas campestris pv. campestris (strain 8004).